The chain runs to 256 residues: Putative ankyrin repeat protein FPV231 (256 aa).

ANK repeat units lie at residues 1–20, 24–53, 57–86, 90–119, and 123–151; these read MFGN…RIDS, EECL…DTNI, YNRS…DYNL, HGYT…DPNI, and EKHT…DINI.

The protein is Putative ankyrin repeat protein FPV231 of Vertebrata (FPV).